Consider the following 151-residue polypeptide: D-aminoacyl-tRNA deacylase (151 aa).

Residues 137-138 (GP) carry the Gly-cisPro motif, important for rejection of L-amino acids motif.

Belongs to the DTD family. Homodimer.

The protein localises to the cytoplasm. It catalyses the reaction glycyl-tRNA(Ala) + H2O = tRNA(Ala) + glycine + H(+). The enzyme catalyses a D-aminoacyl-tRNA + H2O = a tRNA + a D-alpha-amino acid + H(+). Its function is as follows. An aminoacyl-tRNA editing enzyme that deacylates mischarged D-aminoacyl-tRNAs. Also deacylates mischarged glycyl-tRNA(Ala), protecting cells against glycine mischarging by AlaRS. Acts via tRNA-based rather than protein-based catalysis; rejects L-amino acids rather than detecting D-amino acids in the active site. By recycling D-aminoacyl-tRNA to D-amino acids and free tRNA molecules, this enzyme counteracts the toxicity associated with the formation of D-aminoacyl-tRNA entities in vivo and helps enforce protein L-homochirality. This chain is D-aminoacyl-tRNA deacylase, found in Azoarcus sp. (strain BH72).